Here is a 507-residue protein sequence, read N- to C-terminus: Probable cytosol aminopeptidase (507 aa).

The Mn(2+) site is built by lysine 275 and aspartate 280. Residue lysine 287 is part of the active site. Residues aspartate 298, aspartate 357, and glutamate 359 each coordinate Mn(2+). Arginine 361 is a catalytic residue.

Belongs to the peptidase M17 family. Mn(2+) serves as cofactor.

Its subcellular location is the cytoplasm. It catalyses the reaction Release of an N-terminal amino acid, Xaa-|-Yaa-, in which Xaa is preferably Leu, but may be other amino acids including Pro although not Arg or Lys, and Yaa may be Pro. Amino acid amides and methyl esters are also readily hydrolyzed, but rates on arylamides are exceedingly low.. The enzyme catalyses Release of an N-terminal amino acid, preferentially leucine, but not glutamic or aspartic acids.. Its function is as follows. Presumably involved in the processing and regular turnover of intracellular proteins. Catalyzes the removal of unsubstituted N-terminal amino acids from various peptides. This is Probable cytosol aminopeptidase from Acidobacterium capsulatum (strain ATCC 51196 / DSM 11244 / BCRC 80197 / JCM 7670 / NBRC 15755 / NCIMB 13165 / 161).